The following is a 143-amino-acid chain: Large ribosomal subunit protein uL15 (143 aa).

Basic residues-rich tracts occupy residues 1–13 and 23–38; these read MIRK…KQRG and KKHR…GNAG. The tract at residues 1 to 38 is disordered; that stretch reads MIRKSKKITKQRGSRTCGYGEAKKHRGAGHRGGRGNAG.

The protein belongs to the universal ribosomal protein uL15 family. Part of the 50S ribosomal subunit.

In terms of biological role, binds to the 23S rRNA. The chain is Large ribosomal subunit protein uL15 from Methanococcus vannielii.